A 431-amino-acid polypeptide reads, in one-letter code: Adenylosuccinate synthetase (431 aa).

Residues 13-19 (GDEGKGK) and 41-43 (GHT) contribute to the GTP site. Residue Asp-14 is the Proton acceptor of the active site. Asp-14 and Gly-41 together coordinate Mg(2+). Residues 14 to 17 (DEGK), 39 to 42 (NAGH), Thr-130, Arg-144, Gln-225, Thr-240, and Arg-304 contribute to the IMP site. Catalysis depends on His-42, which acts as the Proton donor. Substrate is bound at residue 300–306 (SVTGRPR). GTP is bound by residues Arg-306, 332 to 334 (KLD), and 414 to 416 (STG).

The protein belongs to the adenylosuccinate synthetase family. Homodimer. Mg(2+) is required as a cofactor.

The protein localises to the cytoplasm. The catalysed reaction is IMP + L-aspartate + GTP = N(6)-(1,2-dicarboxyethyl)-AMP + GDP + phosphate + 2 H(+). Its pathway is purine metabolism; AMP biosynthesis via de novo pathway; AMP from IMP: step 1/2. Plays an important role in the de novo pathway of purine nucleotide biosynthesis. Catalyzes the first committed step in the biosynthesis of AMP from IMP. The chain is Adenylosuccinate synthetase from Bordetella avium (strain 197N).